The sequence spans 342 residues: Platelet-activating factor receptor (342 aa).

The Extracellular portion of the chain corresponds to 1-16 (MEPHDSSHMDSEFRYT). The helical transmembrane segment at 17–38 (LFPIVYSIIFVLGVIANGYVLW) threads the bilayer. Topologically, residues 39 to 54 (VFARLYPCKKFNEIKI) are cytoplasmic. A helical membrane pass occupies residues 55–74 (FMVNLTMADMLFLITLPLWI). Topologically, residues 75–91 (VYYQNQGNWILPKFLCN) are extracellular. Cysteines 90 and 173 form a disulfide. The helical transmembrane segment at 92 to 113 (VAGCLFFINTYCSVAFLGVITY) threads the bilayer. The Cytoplasmic portion of the chain corresponds to 114-133 (NRFQAVTRPIKTAQANTRKR). A helical transmembrane segment spans residues 134-155 (GISLSLVIWVAIVGAASYFLIL). Residues 156-184 (DSTNTVPDSAGSGNVTRCFEHYEKGSVPV) lie on the Extracellular side of the membrane. The N-linked (GlcNAc...) asparagine glycan is linked to Asn-169. A helical transmembrane segment spans residues 185-205 (LIIHIFIVFSFFLVFLIILFC). Residues 206–233 (NLVIIRTLLMQPVQQQRNAEVKRRALWM) are Cytoplasmic-facing. The chain crosses the membrane as a helical span at residues 234–254 (VCTVLAVFIICFVPHHVVQLP). Over 255 to 276 (WTLAELGFQDSKFHQAINDAHQ) the chain is Extracellular. The chain crosses the membrane as a helical span at residues 277-296 (VTLCLLSTNCVLDPVIYCFL). The Cytoplasmic segment spans residues 297–342 (TKKFRKHLTEKFYSMRSSRKCSRATTDTVTEVVVPFNQIPGNSLKN).

Belongs to the G-protein coupled receptor 1 family. Interacts with ARRB1. Expressed in the placenta, lung, left and right heart ventricles, heart atrium, leukocytes and differentiated HL-60 granulocytes.

It localises to the cell membrane. Receptor for platelet activating factor, a chemotactic phospholipid mediator that possesses potent inflammatory, smooth-muscle contractile and hypotensive activity. Seems to mediate its action via a G protein that activates a phosphatidylinositol-calcium second messenger system. The sequence is that of Platelet-activating factor receptor (PTAFR) from Homo sapiens (Human).